Consider the following 504-residue polypeptide: Maturase K (504 aa).

This sequence belongs to the intron maturase 2 family. MatK subfamily.

Its subcellular location is the plastid. The protein localises to the chloroplast. Functionally, usually encoded in the trnK tRNA gene intron. Probably assists in splicing its own and other chloroplast group II introns. The protein is Maturase K of Thlaspi arvense (Field penny-cress).